A 289-amino-acid polypeptide reads, in one-letter code: Diaminopimelate epimerase (289 aa).

Positions 17, 47, and 67 each coordinate substrate. The active-site Proton donor is the cysteine 76. Residues 77–78 (GN), asparagine 164, asparagine 198, and 216–217 (ER) contribute to the substrate site. The active-site Proton acceptor is the cysteine 225. 226–227 (GS) is a substrate binding site.

It belongs to the diaminopimelate epimerase family. As to quaternary structure, homodimer.

It localises to the cytoplasm. The enzyme catalyses (2S,6S)-2,6-diaminopimelate = meso-2,6-diaminopimelate. Its pathway is amino-acid biosynthesis; L-lysine biosynthesis via DAP pathway; DL-2,6-diaminopimelate from LL-2,6-diaminopimelate: step 1/1. Its function is as follows. Catalyzes the stereoinversion of LL-2,6-diaminopimelate (L,L-DAP) to meso-diaminopimelate (meso-DAP), a precursor of L-lysine and an essential component of the bacterial peptidoglycan. The polypeptide is Diaminopimelate epimerase (Bradyrhizobium sp. (strain ORS 278)).